A 350-amino-acid chain; its full sequence is Anthranilate phosphoribosyltransferase (350 aa).

5-phospho-alpha-D-ribose 1-diphosphate is bound by residues G94, 97–98 (GD), T102, 104–107 (NIST), 122–130 (KHGNRAVSS), and S134. Position 94 (G94) interacts with anthranilate. S106 contributes to the Mg(2+) binding site. N125 contributes to the anthranilate binding site. R180 contacts anthranilate. D239 and E240 together coordinate Mg(2+).

This sequence belongs to the anthranilate phosphoribosyltransferase family. In terms of assembly, homodimer. Mg(2+) is required as a cofactor.

It catalyses the reaction N-(5-phospho-beta-D-ribosyl)anthranilate + diphosphate = 5-phospho-alpha-D-ribose 1-diphosphate + anthranilate. It participates in amino-acid biosynthesis; L-tryptophan biosynthesis; L-tryptophan from chorismate: step 2/5. Functionally, catalyzes the transfer of the phosphoribosyl group of 5-phosphorylribose-1-pyrophosphate (PRPP) to anthranilate to yield N-(5'-phosphoribosyl)-anthranilate (PRA). The polypeptide is Anthranilate phosphoribosyltransferase (Geobacter sulfurreducens (strain ATCC 51573 / DSM 12127 / PCA)).